Consider the following 82-residue polypeptide: Endocuticle structural protein SgAbd-6 (82 aa).

The residue at position 1 (Gln1) is a Pyrrolidone carboxylic acid. The Chitin-binding type R&amp;R domain occupies 18 to 82 (LGQYTFGFKT…ENGFQPQYTQ (65 aa)).

Component of the abdominal endocuticle. In Schistocerca gregaria (Desert locust), this protein is Endocuticle structural protein SgAbd-6.